Consider the following 342-residue polypeptide: Cytochrome c oxidase subunit 2 (342 aa).

The N-terminal stretch at 1–22 (MKLWKTASRFLPLSFLTLFLTG) is a signal peptide. The N-palmitoyl cysteine moiety is linked to residue C23. Residue C23 is the site of S-diacylglycerol cysteine attachment. Residues 23-50 (CLGEENLTALDPKGPQAQWIYDNMILSI) are Extracellular-facing. Residues 23-249 (CLGEENLTAL…MSAEVEEPTE (227 aa)) form a cytochrome c oxidase subunit II region. The helical transmembrane segment at 51 to 69 (IVMALVSIVVFAIFFIILA) threads the bilayer. The Cytoplasmic segment spans residues 70 to 89 (KYRRKPGDDEIPKQVHGNTA). Residues 90-108 (LEITWTVIPIILLVILAVP) traverse the membrane as a helical segment. Topologically, residues 109–342 (TITGTFMFAD…AYLRSLKVME (234 aa)) are extracellular. Cu cation-binding residues include H175, C210, C214, and H218. A Cytochrome c domain is found at 250–342 (TLANQGRQVF…AYLRSLKVME (93 aa)). C264, C267, H268, and M317 together coordinate heme c.

It belongs to the cytochrome c oxidase subunit 2 family. Cu cation serves as cofactor. Heme c is required as a cofactor.

It localises to the cell membrane. It carries out the reaction 4 Fe(II)-[cytochrome c] + O2 + 8 H(+)(in) = 4 Fe(III)-[cytochrome c] + 2 H2O + 4 H(+)(out). Functionally, subunits I and II form the functional core of the enzyme complex. Electrons originating in cytochrome c are transferred via heme a and Cu(A) to the binuclear center formed by heme a3 and Cu(B). This chain is Cytochrome c oxidase subunit 2 (ctaC), found in Alkalihalophilus pseudofirmus (strain ATCC BAA-2126 / JCM 17055 / OF4) (Bacillus pseudofirmus).